Reading from the N-terminus, the 358-residue chain is Photosystem II protein D1 3 (358 aa).

3 helical membrane-spanning segments follow: residues 28-45 (YIGW…AATT), 117-132 (HFLI…QWEL), and 141-155 (WICV…AAMA). Histidine 117 is a binding site for chlorophyll a. Tyrosine 125 lines the pheophytin a pocket. The [CaMn4O5] cluster site is built by aspartate 169 and glutamate 188. A helical membrane pass occupies residues 196 to 217 (FHMLGVAGVFGGSLFSAMHGSL). Histidine 197 provides a ligand contact to chlorophyll a. A quinone is bound by residues histidine 214 and 263 to 264 (SF). Histidine 214 is a binding site for Fe cation. Histidine 271 lines the Fe cation pocket. A helical membrane pass occupies residues 273–287 (LLGAWPVVGIWFTSM). 4 residues coordinate [CaMn4O5] cluster: histidine 331, glutamate 332, aspartate 341, and alanine 343. Residues 344 to 358 (TVESTPVALQAPAIG) constitute a propeptide that is removed on maturation.

It belongs to the reaction center PufL/M/PsbA/D family. In terms of assembly, PSII is composed of 1 copy each of membrane proteins PsbA, PsbB, PsbC, PsbD, PsbE, PsbF, PsbH, PsbI, PsbJ, PsbK, PsbL, PsbM, PsbT, PsbX, PsbY, PsbZ, Psb30/Ycf12, peripheral proteins PsbO, CyanoQ (PsbQ), PsbU, PsbV and a large number of cofactors. It forms dimeric complexes. The cofactor is The D1/D2 heterodimer binds P680, chlorophylls that are the primary electron donor of PSII, and subsequent electron acceptors. It shares a non-heme iron and each subunit binds pheophytin, quinone, additional chlorophylls, carotenoids and lipids. D1 provides most of the ligands for the Mn4-Ca-O5 cluster of the oxygen-evolving complex (OEC). There is also a Cl(-1) ion associated with D1 and D2, which is required for oxygen evolution. The PSII complex binds additional chlorophylls, carotenoids and specific lipids.. Tyr-160 forms a radical intermediate that is referred to as redox-active TyrZ, YZ or Y-Z. Post-translationally, C-terminally processed by CtpA; processing is essential to allow assembly of the oxygen-evolving complex and thus photosynthetic growth.

Its subcellular location is the cellular thylakoid membrane. It carries out the reaction 2 a plastoquinone + 4 hnu + 2 H2O = 2 a plastoquinol + O2. Functionally, photosystem II (PSII) is a light-driven water:plastoquinone oxidoreductase that uses light energy to abstract electrons from H(2)O, generating O(2) and a proton gradient subsequently used for ATP formation. It consists of a core antenna complex that captures photons, and an electron transfer chain that converts photonic excitation into a charge separation. The D1/D2 (PsbA/PsbD) reaction center heterodimer binds P680, the primary electron donor of PSII as well as several subsequent electron acceptors. The sequence is that of Photosystem II protein D1 3 from Synechococcus sp. (strain CC9311).